The sequence spans 345 residues: Anthranilate phosphoribosyltransferase (345 aa).

5-phospho-alpha-D-ribose 1-diphosphate is bound by residues G75, 78–79 (GD), S83, 85–88 (NIST), 103–111 (KHGNRAASS), and G115. An anthranilate-binding site is contributed by G75. Residue S87 participates in Mg(2+) binding. An anthranilate-binding site is contributed by N106. R161 is a binding site for anthranilate. 2 residues coordinate Mg(2+): D219 and E220.

The protein belongs to the anthranilate phosphoribosyltransferase family. In terms of assembly, homodimer. Mg(2+) serves as cofactor.

It catalyses the reaction N-(5-phospho-beta-D-ribosyl)anthranilate + diphosphate = 5-phospho-alpha-D-ribose 1-diphosphate + anthranilate. It participates in amino-acid biosynthesis; L-tryptophan biosynthesis; L-tryptophan from chorismate: step 2/5. Functionally, catalyzes the transfer of the phosphoribosyl group of 5-phosphorylribose-1-pyrophosphate (PRPP) to anthranilate to yield N-(5'-phosphoribosyl)-anthranilate (PRA). The protein is Anthranilate phosphoribosyltransferase of Nocardia farcinica (strain IFM 10152).